We begin with the raw amino-acid sequence, 134 residues long: Large ribosomal subunit protein uL16c (134 aa).

The interval Met-1–His-22 is disordered.

The protein belongs to the universal ribosomal protein uL16 family. In terms of assembly, part of the 50S ribosomal subunit.

It localises to the plastid. The protein localises to the chloroplast. The sequence is that of Large ribosomal subunit protein uL16c from Nicotiana tabacum (Common tobacco).